A 641-amino-acid polypeptide reads, in one-letter code: Bifunctional protein glk (641 aa).

A disordered region spans residues 1–21 (MSTGAQTKAAEASQHADGPRL). Positions 1-340 (MSTGAQTKAA…QLSNRTGGAS (340 aa)) are glucokinase. 23–28 (ADVGGT) serves as a coordination point for ATP. The region spanning 341–417 (SAVFERIRQM…LKLATGLTGT (77 aa)) is the HTH rpiR-type domain. Residues 341 to 641 (SAVFERIRQM…SHGAAPAAKE (301 aa)) form a putative HTH-type transcriptional regulator region. The segment at residues 377 to 396 (IVDIARKADVSQPTVIRFCR) is a DNA-binding region (H-T-H motif). Residues 461–600 (AIDILNNARR…AVGVAIRRAS (140 aa)) enclose the SIS domain. The helical transmembrane segment at 576–596 (SMISRILHLVMIDILAVGVAI) threads the bilayer.

It in the N-terminal section; belongs to the bacterial glucokinase family.

It is found in the membrane. It carries out the reaction D-glucose + ATP = D-glucose 6-phosphate + ADP + H(+). The polypeptide is Bifunctional protein glk (glk) (Burkholderia thailandensis (strain ATCC 700388 / DSM 13276 / CCUG 48851 / CIP 106301 / E264)).